The following is a 95-amino-acid chain: Co-chaperonin GroES (95 aa).

The protein belongs to the GroES chaperonin family. Heptamer of 7 subunits arranged in a ring. Interacts with the chaperonin GroEL.

Its subcellular location is the cytoplasm. Functionally, together with the chaperonin GroEL, plays an essential role in assisting protein folding. The GroEL-GroES system forms a nano-cage that allows encapsulation of the non-native substrate proteins and provides a physical environment optimized to promote and accelerate protein folding. GroES binds to the apical surface of the GroEL ring, thereby capping the opening of the GroEL channel. The protein is Co-chaperonin GroES of Clostridium botulinum (strain ATCC 19397 / Type A).